Here is a 208-residue protein sequence, read N- to C-terminus: Proteasome subunit beta 2 (208 aa).

Residues 1–14 constitute a propeptide, removed in mature form; by autocatalysis; the sequence is MGNELQLENKILKG. The active-site Nucleophile is the threonine 15.

Belongs to the peptidase T1B family. As to quaternary structure, the 20S proteasome core is composed of 14 alpha and 14 beta subunits that assemble into four stacked heptameric rings, resulting in a barrel-shaped structure. The two inner rings, each composed of seven catalytic beta subunits, are sandwiched by two outer rings, each composed of seven alpha subunits. The catalytic chamber with the active sites is on the inside of the barrel. Has a gated structure, the ends of the cylinder being occluded by the N-termini of the alpha-subunits. Is capped at one or both ends by the proteasome regulatory ATPase, PAN.

It localises to the cytoplasm. It catalyses the reaction Cleavage of peptide bonds with very broad specificity.. Its activity is regulated as follows. The formation of the proteasomal ATPase PAN-20S proteasome complex, via the docking of the C-termini of PAN into the intersubunit pockets in the alpha-rings, triggers opening of the gate for substrate entry. Interconversion between the open-gate and close-gate conformations leads to a dynamic regulation of the 20S proteasome proteolysis activity. Its function is as follows. Component of the proteasome core, a large protease complex with broad specificity involved in protein degradation. The polypeptide is Proteasome subunit beta 2 (Saccharolobus solfataricus (strain ATCC 35092 / DSM 1617 / JCM 11322 / P2) (Sulfolobus solfataricus)).